The sequence spans 212 residues: Ribosomal RNA small subunit methyltransferase G (212 aa).

Residues G73, F78, 124–125 (IE), and R137 contribute to the S-adenosyl-L-methionine site.

This sequence belongs to the methyltransferase superfamily. RNA methyltransferase RsmG family.

It localises to the cytoplasm. Specifically methylates the N7 position of a guanine in 16S rRNA. The sequence is that of Ribosomal RNA small subunit methyltransferase G from Karelsulcia muelleri (strain GWSS) (Sulcia muelleri).